The following is a 469-amino-acid chain: Cyclin-dependent kinase 14 (469 aa).

Phosphoserine occurs at positions 24, 78, and 95. The interval Phe103 to Asp133 is disordered. At Ser134 the chain carries Phosphoserine. The region spanning Tyr135–Phe419 is the Protein kinase domain. Residues Leu141–Val149 and Lys164 each bind ATP. Asp256 acts as the Proton acceptor in catalysis. Positions Glu449–His469 are disordered. The segment covering Lys456 to His469 has biased composition (polar residues).

This sequence belongs to the protein kinase superfamily. CMGC Ser/Thr protein kinase family. CDC2/CDKX subfamily. As to quaternary structure, found in a complex with LRP6, CCNY and CAPRIN2 during G2/M stage; CAPRIN2 functions as a scaffold for the complex by binding to CCNY via its N terminus and to CDK14 via its C terminus. Interacts with CCNY; CCNY mediates its recruitment to the plasma membrane and promotes phosphorylation of LRP6. Interacts with CCDN3 and CDKN1A. Interacts with SEPT8. Interacts with 14-3-3 proteina YWHAB, YWHAE, YWHAH and YWHAQ. Highly expressed in brain, pancreas, kidney, heart, testis and ovary. Also detected at lower levels in other tissues except in spleen and thymus where expression is barely detected.

It is found in the cell membrane. Its subcellular location is the cytoplasm. It localises to the nucleus. The enzyme catalyses L-seryl-[protein] + ATP = O-phospho-L-seryl-[protein] + ADP + H(+). It carries out the reaction L-threonyl-[protein] + ATP = O-phospho-L-threonyl-[protein] + ADP + H(+). Its activity is regulated as follows. Serine/threonine-protein kinase activity is promoted by associated cyclins CCDN3 and CCNY and repressed by CDKN1A. Serine/threonine-protein kinase involved in the control of the eukaryotic cell cycle, whose activity is controlled by an associated cyclin. Acts as a cell-cycle regulator of Wnt signaling pathway during G2/M phase by mediating the phosphorylation of LRP6 at 'Ser-1490', leading to the activation of the Wnt signaling pathway. Acts as a regulator of cell cycle progression and cell proliferation via its interaction with CCDN3. Phosphorylates RB1 in vitro, however the relevance of such result remains to be confirmed in vivo. May also play a role in meiosis, neuron differentiation and may indirectly act as a negative regulator of insulin-responsive glucose transport. The polypeptide is Cyclin-dependent kinase 14 (CDK14) (Homo sapiens (Human)).